Here is a 133-residue protein sequence, read N- to C-terminus: uncharacterized protein (133 aa).

The protein belongs to the mimivirus L15/L51/R83 family.

This is an uncharacterized protein from Acanthamoeba polyphaga (Amoeba).